A 481-amino-acid chain; its full sequence is Abietadienol/abietadienal oxidase (481 aa).

The helical transmembrane segment at Ala2–Ile22 threads the bilayer. Heme is bound at residue Cys430.

This sequence belongs to the cytochrome P450 family. The cofactor is heme. As to expression, expressed in young tissues such as flushing buds and green bark tissues. Lower levels in mature needles and bark.

The protein localises to the membrane. It catalyses the reaction abieta-7,13-dien-18-ol + 2 reduced [NADPH--hemoprotein reductase] + 2 O2 = abieta-7,13-dien-18-oate + 2 oxidized [NADPH--hemoprotein reductase] + 3 H2O + 3 H(+). Multifunctional and multisubstrate cytochrome P450 that oxidizes the respective carbon 18 of abietadienol, abietadienal, levopimaradienol, isopimara-7,15-dienol, isopimara-7,15-dienal, dehydroabietadienol, and dehydroabietadienal. The chain is Abietadienol/abietadienal oxidase (CYP720B1) from Pinus taeda (Loblolly pine).